The primary structure comprises 527 residues: GMP synthase [glutamine-hydrolyzing] (527 aa).

The 194-residue stretch at 19 to 212 (KIIVLDYGSQ…AFSICGAKGD (194 aa)) folds into the Glutamine amidotransferase type-1 domain. Residue cysteine 96 is the Nucleophile of the active site. Catalysis depends on residues histidine 186 and glutamate 188. The GMPS ATP-PPase domain maps to 213-402 (WSMANFVDMQ…LGMPDEVVWR (190 aa)). Residue 240–246 (SGGVDSS) coordinates ATP.

Homodimer.

It catalyses the reaction XMP + L-glutamine + ATP + H2O = GMP + L-glutamate + AMP + diphosphate + 2 H(+). It participates in purine metabolism; GMP biosynthesis; GMP from XMP (L-Gln route): step 1/1. Functionally, catalyzes the synthesis of GMP from XMP. This Streptococcus thermophilus (strain ATCC BAA-250 / LMG 18311) protein is GMP synthase [glutamine-hydrolyzing].